Here is a 484-residue protein sequence, read N- to C-terminus: Glutamyl-tRNA(Gln) amidotransferase subunit A (484 aa).

Catalysis depends on charge relay system residues lysine 77 and serine 152. The Acyl-ester intermediate role is filled by serine 176.

This sequence belongs to the amidase family. GatA subfamily. In terms of assembly, heterotrimer of A, B and C subunits.

The enzyme catalyses L-glutamyl-tRNA(Gln) + L-glutamine + ATP + H2O = L-glutaminyl-tRNA(Gln) + L-glutamate + ADP + phosphate + H(+). In terms of biological role, allows the formation of correctly charged Gln-tRNA(Gln) through the transamidation of misacylated Glu-tRNA(Gln) in organisms which lack glutaminyl-tRNA synthetase. The reaction takes place in the presence of glutamine and ATP through an activated gamma-phospho-Glu-tRNA(Gln). In Lacticaseibacillus paracasei (strain ATCC 334 / BCRC 17002 / CCUG 31169 / CIP 107868 / KCTC 3260 / NRRL B-441) (Lactobacillus paracasei), this protein is Glutamyl-tRNA(Gln) amidotransferase subunit A.